Reading from the N-terminus, the 1189-residue chain is Origin recognition complex subunit 1 (1189 aa).

Residues 1–53 (MTPKKKIFQNFQANDNEILSPTKKGIKLNVSKLNILNFENTIITKEKTNYEYK) form a required for peripherial nuclear localization region. T2 is modified (phosphothreonine). Residue S20 is modified to Phosphoserine. Leucine heptad repeat repeat units follow at residues 137–143 (LTNISSS), 144–150 (LTNISSS), 151–157 (LTNISSS), and 158–164 (LSNSLDE). Basic residues predominate over residues 239–248 (KKNISKKNTH). 2 disordered regions span residues 239-421 (KKNI…DHTD) and 679-749 (DTQA…QSSL). The segment covering 254-279 (QNDKNKEKNKEKDKNIKKDRDKDIQT) has biased composition (basic and acidic residues). The span at 304–320 (NNDNVKNNLKNNINNNN) shows a compositional bias: low complexity. Positions 321-339 (TLKRSSQSVRIDSDLSSAH) are enriched in polar residues. Over residues 353-381 (HRNNNNNNNNNNKTTSNNHNKNNKINNNN) the composition is skewed to low complexity. A compositionally biased stretch (basic and acidic residues) spans 385–394 (NYKKQTDTKH). Low complexity predominate over residues 395 to 411 (TNNTQNNKYNKTKTTNT). Positions 695 to 709 (KAQTTTNVKANTHTK) are enriched in polar residues. Basic and acidic residues-rich tracts occupy residues 710–724 (TLNDHNKSKTTKNKE) and 733–742 (DVKKKSDPHN). ATP-binding positions include V780 and 815–823 (GMPGTGKTA). D903 and E904 together coordinate Mg(2+). E904 serves as a coordination point for ATP. The short motif at 913–922 (QKVLFTLFDW) is the PIP-box element. ATP-binding residues include N937 and R1003.

The protein belongs to the ORC1 family. Component of the origin recognition complex (ORC). Interacts (via PIP-box) with PCNA1; the interaction occurs during DNA replication in trophozoites. Post-translationally, in schizonts, may be phosphorylated by PK5; phosphorylation leads to ORC1 dissociation from the telomeres and var gene promoters, translocation to the cytoplasm, where it is degraded by the proteasome.

It is found in the nucleus. It localises to the chromosome. The protein resides in the telomere. The protein localises to the nucleolus. The enzyme catalyses ATP + H2O = ADP + phosphate + H(+). In terms of biological role, component of the origin recognition complex (ORC) that binds origins of replication and thus may regulate the initiation of DNA replication. DNA-binding may not be ATP-dependent. In a SIR2A/Sir2-dependent manner, binds to and silences telomers and subtelomeric repeat regions (TAREs). In a SIR2A/Sir2-dependent manner, binds to promoters of var genes localized next to TAREs resulting in their silencing. The protein is Origin recognition complex subunit 1 of Plasmodium falciparum (isolate 3D7).